A 427-amino-acid chain; its full sequence is Peptidase B (427 aa).

Positions 195 and 200 each coordinate Mn(2+). The active site involves Lys207. Positions 218, 277, and 279 each coordinate Mn(2+). Arg281 is an active-site residue.

This sequence belongs to the peptidase M17 family. In terms of assembly, homohexamer. Requires Mn(2+) as cofactor.

The protein localises to the cytoplasm. The catalysed reaction is Release of an N-terminal amino acid, Xaa, from a peptide or arylamide. Xaa is preferably Glu or Asp but may be other amino acids, including Leu, Met, His, Cys and Gln.. Functionally, probably plays an important role in intracellular peptide degradation. This is Peptidase B from Salmonella dublin (strain CT_02021853).